Here is a 147-residue protein sequence, read N- to C-terminus: 2-amino-4-hydroxy-6-hydroxymethyldihydropteridine pyrophosphokinase (147 aa).

The protein belongs to the HPPK family.

It carries out the reaction 6-hydroxymethyl-7,8-dihydropterin + ATP = (7,8-dihydropterin-6-yl)methyl diphosphate + AMP + H(+). It participates in cofactor biosynthesis; tetrahydrofolate biosynthesis; 2-amino-4-hydroxy-6-hydroxymethyl-7,8-dihydropteridine diphosphate from 7,8-dihydroneopterin triphosphate: step 4/4. In terms of biological role, catalyzes the transfer of pyrophosphate from adenosine triphosphate (ATP) to 6-hydroxymethyl-7,8-dihydropterin, an enzymatic step in folate biosynthesis pathway. The chain is 2-amino-4-hydroxy-6-hydroxymethyldihydropteridine pyrophosphokinase (folK) from Porphyromonas gingivalis (strain ATCC 33277 / DSM 20709 / CIP 103683 / JCM 12257 / NCTC 11834 / 2561).